A 314-amino-acid polypeptide reads, in one-letter code: Olfactory receptor 1Q1 (314 aa).

At 1–25 (MDNSNWTSVSHFVLLGISTHPEEQI) the chain is on the extracellular side. An N-linked (GlcNAc...) asparagine glycan is attached at Asn-5. The helical transmembrane segment at 26–49 (PLFLVFSLMYAINISGNLAIITLI) threads the bilayer. At 50-57 (LSAPRLHI) the chain is on the cytoplasmic side. The helical transmembrane segment at 58–79 (PMYIFLSNLALTDICFTSTTVP) threads the bilayer. Residues 80–100 (KMLQIIFSPTKVISYTGCLAQ) are Extracellular-facing. Cysteines 97 and 189 form a disulfide. The chain crosses the membrane as a helical span at residues 101–120 (TYFFICFAVMENFILAVMAY). Topologically, residues 121-139 (DRYIAICHPFHYTMILTRM) are cytoplasmic. A helical membrane pass occupies residues 140–158 (LCVKMVVMCHALSHLHAML). Residues 159 to 195 (HTFLIGQLIFCADNRIPHFFCDLYALMKISCTSTYLN) lie on the Extracellular side of the membrane. The helical transmembrane segment at 196-219 (TLMIHTEGAVVISGALAFITASYA) threads the bilayer. Residues 220–236 (CIILVVLRIPSAKGRWK) are Cytoplasmic-facing. Residues 237 to 259 (TFSTCGSHLTVVAIFYGTLSWVY) form a helical membrane-spanning segment. Topologically, residues 260–272 (FRPLSSYSVTKGR) are extracellular. The helical transmembrane segment at 273–292 (IITVVYTVVTPMLNPFIYSL) threads the bilayer. At 293–314 (RNGDVKGGFMKWMSRMQTFFFR) the chain is on the cytoplasmic side.

This sequence belongs to the G-protein coupled receptor 1 family.

It is found in the cell membrane. Odorant receptor. This chain is Olfactory receptor 1Q1 (OR1Q1), found in Homo sapiens (Human).